A 157-amino-acid chain; its full sequence is Beta-defensin 125 (157 aa).

The signal sequence occupies residues 1 to 20 (MNILMLTFIICGLLTQVTKG). Intrachain disulfides connect Cys27–Cys55, Cys35–Cys49, and Cys39–Cys56. The tract at residues 109 to 157 (GETMTPETNTPETTVPPSETTTPETTMPPSETATSETMPPPSQTALTHN) is disordered. The segment covering 110 to 145 (ETMTPETNTPETTVPPSETTTPETTMPPSETATSET) has biased composition (low complexity).

It belongs to the beta-defensin family.

The protein resides in the secreted. Has antibacterial activity. The chain is Beta-defensin 125 (DEFB125) from Gorilla gorilla gorilla (Western lowland gorilla).